We begin with the raw amino-acid sequence, 328 residues long: Cytochrome c biogenesis protein CcsA (328 aa).

8 helical membrane-spanning segments follow: residues 13–33 (ISFSVVSIVLTIYFLTLLVNL), 46–66 (GIIITFFGITGLLFTRWIYSG), 73–93 (LYESLIFLSWAFSIIHMVSYF), 101–121 (LNAITAPSAIFIQGFATSGLL), 146–166 (MILGYGALLCGSLLSIALLVI), 234–254 (IISLGFIFLTVGILSGAVWAN), 263–283 (WDPKETWAFITWTIFAIYLHI), and 295–315 (AIVASIGFLLIWICYFGVILL).

Belongs to the CcmF/CycK/Ccl1/NrfE/CcsA family. In terms of assembly, may interact with Ccs1.

It localises to the plastid. Its subcellular location is the chloroplast thylakoid membrane. In terms of biological role, required during biogenesis of c-type cytochromes (cytochrome c6 and cytochrome f) at the step of heme attachment. This chain is Cytochrome c biogenesis protein CcsA, found in Crucihimalaya wallichii (Rock-cress).